The following is an 84-amino-acid chain: U8-theraphotoxin-Hhn1g (84 aa).

The first 21 residues, 1–21 (MKVVLLVCLVWMMAMMELVSC), serve as a signal peptide directing secretion. Intrachain disulfides connect C23–C35, C29–C44, C34–C67, C54–C75, and C69–C81.

The protein belongs to the AVIT (prokineticin) family. As to expression, expressed by the venom gland.

Its subcellular location is the secreted. This chain is U8-theraphotoxin-Hhn1g, found in Cyriopagopus hainanus (Chinese bird spider).